Consider the following 444-residue polypeptide: Homogentisate 1,2-dioxygenase (444 aa).

The active-site Proton acceptor is His298. His341 and Glu347 together coordinate Fe cation. 2 residues coordinate homogentisate: Tyr356 and His377. His377 is a Fe cation binding site.

It belongs to the homogentisate dioxygenase family. Hexamer; dimer of trimers. The cofactor is Fe cation.

The enzyme catalyses homogentisate + O2 = 4-maleylacetoacetate + H(+). The protein operates within amino-acid degradation; L-phenylalanine degradation; acetoacetate and fumarate from L-phenylalanine: step 4/6. In terms of biological role, involved in the catabolism of homogentisate (2,5-dihydroxyphenylacetate or 2,5-OH-PhAc), a central intermediate in the degradation of phenylalanine and tyrosine. Catalyzes the oxidative ring cleavage of the aromatic ring of homogentisate to yield maleylacetoacetate. The chain is Homogentisate 1,2-dioxygenase from Burkholderia ambifaria (strain ATCC BAA-244 / DSM 16087 / CCUG 44356 / LMG 19182 / AMMD) (Burkholderia cepacia (strain AMMD)).